A 238-amino-acid chain; its full sequence is Putative csd-like protein HI_1343 (238 aa).

Residue Lys-146 is modified to N6-(pyridoxal phosphate)lysine.

This sequence belongs to the class-V pyridoxal-phosphate-dependent aminotransferase family. Csd subfamily.

This chain is Putative csd-like protein HI_1343, found in Haemophilus influenzae (strain ATCC 51907 / DSM 11121 / KW20 / Rd).